The primary structure comprises 113 residues: MTGHAFGIVMPEVVKTVVGTAASAIYHYPTAVMATFVTAAVVASPENAAETVKNAACTVMKAAECAYHDVAGIVNVAAGVGHFVYDNLPSYGEMDLVGSDSMEAVIPWIGAVA.

This sequence belongs to the UPF0416 family.

This chain is UPF0416 protein RF_0879, found in Rickettsia felis (strain ATCC VR-1525 / URRWXCal2) (Rickettsia azadi).